The sequence spans 88 residues: Kunitz-type U15-theraphotoxin-Hhn1p (88 aa).

Residues 1-27 (MGIARILSAVLFLSVLFVVTFPTLLSA) form the signal peptide. Residues 28 to 33 (DHHDGR) constitute a propeptide that is removed on maturation. The BPTI/Kunitz inhibitor domain occupies 37-85 (CRLPSDRGRCKASFERWYFNGTTCTKFVYGGYGGNDNRFPTEKACMKRC). Cystine bridges form between C37–C85 and C60–C81.

This sequence belongs to the venom Kunitz-type family. 01 (intermediate) subfamily. Expressed by the venom gland.

The protein localises to the secreted. In terms of biological role, serine protease inhibitor that inhibits trypsin at a molar ratio of 1:1. In Cyriopagopus hainanus (Chinese bird spider), this protein is Kunitz-type U15-theraphotoxin-Hhn1p.